A 129-amino-acid polypeptide reads, in one-letter code: Small ribosomal subunit protein eS6 (129 aa).

The interval 53-88 (TGGSDTSGRPMRPDVRGVTTKEIMSDGGVGFEPTTD) is disordered.

It belongs to the eukaryotic ribosomal protein eS6 family.

The protein is Small ribosomal subunit protein eS6 (rps6e) of Haloarcula marismortui (strain ATCC 43049 / DSM 3752 / JCM 8966 / VKM B-1809) (Halobacterium marismortui).